The sequence spans 326 residues: Protein FAM110C (326 aa).

Disordered stretches follow at residues Met-1–Val-37, Thr-51–Leu-80, and Val-201–Arg-221. Polar residues predominate over residues Lys-209–Arg-221. The residue at position 255 (Ser-255) is a Phosphoserine.

It belongs to the FAM110 family. In terms of assembly, interacts with AKT1; the interaction is transient and follows AKT1 activation. Interacts with PPP2CA and alpha-tubulin.

It localises to the cytoplasm. The protein localises to the cytoskeleton. Its subcellular location is the microtubule organizing center. The protein resides in the centrosome. It is found in the spindle pole. It localises to the nucleus. May play a role in microtubule organization. May play a role in cell spreading and cell migration of epithelial cells; the function may involve the AKT1 signaling pathway. The chain is Protein FAM110C (Fam110c) from Rattus norvegicus (Rat).